Here is a 463-residue protein sequence, read N- to C-terminus: MAVDTMESVAVVAVPFPAQGHLNQLLHLSLLLASRGLSVHYAAPPPHVRQARARVHGWDPRALGSIHFHDLDVPAYDSPAPDLAAPSPFPNHLMPMFEAFAAAARAPLAALLQRLSTSYRRVAVVFDRLNPFAATEAARLANADAFGLQCVAISYTVGWLDPGHRLLSDYGLQFLPPDDCMSREFVDLVFRMEEEEQGAPVAGLVMNTCRALEGEFLDAVAAQPPFQGQRFFAVGPLNPLLLDADARTAPRHECLEWLDRQPPESVLYVSFGTTSCLHADQVAELAAALKGSKQRFVWVLRDADRADIYAESGDSRHAKFLSEFTRETEGTGLVVTGWAPQLEILAHGATAAFMSHCGWNSIIESLSHGKPVLAWPMHSDQPWDSELLCNYFKAGLLVRPWEKHAEIIPAQAIQKVIEEAMLSDSGMAVRQRAKELGEAVRASVADGGNSRKDLDDFIGYITR.

Residue His-21 is the Proton acceptor of the active site. 2 residues coordinate an anthocyanidin: His-21 and Asn-91. Asp-127 functions as the Charge relay in the catalytic mechanism. UDP-alpha-D-glucose is bound by residues Ala-339, Gln-341, His-356, Trp-359, Asn-360, Ser-361, Glu-364, Asp-380, and Gln-381.

The protein belongs to the UDP-glycosyltransferase family. In terms of tissue distribution, highly expressed in root. Expressed at much lower level in kernel. Weakly or not expressed in expressed in stems and leaves.

It carries out the reaction cis-zeatin + UDP-alpha-D-glucose = O-beta-D-glucosyl-cis-zeatin + UDP + H(+). Functionally, utilizes UDP-glucose as the sugar donor and catalyzes the formation of O-beta-D-glucosyl-cis-zeatin from cis-zeatin. May regulate active versus storage forms of cytokinins and could have an impact on seed growth. The polypeptide is Cis-zeatin O-glucosyltransferase 2 (Zea mays (Maize)).